Reading from the N-terminus, the 318-residue chain is tRNA-cytidine(32) 2-sulfurtransferase (318 aa).

The short motif at 52–57 (SGGKDS) is the PP-loop motif element. C127, C130, and C218 together coordinate [4Fe-4S] cluster.

It belongs to the TtcA family. In terms of assembly, homodimer. The cofactor is Mg(2+). [4Fe-4S] cluster is required as a cofactor.

It is found in the cytoplasm. The catalysed reaction is cytidine(32) in tRNA + S-sulfanyl-L-cysteinyl-[cysteine desulfurase] + AH2 + ATP = 2-thiocytidine(32) in tRNA + L-cysteinyl-[cysteine desulfurase] + A + AMP + diphosphate + H(+). It functions in the pathway tRNA modification. In terms of biological role, catalyzes the ATP-dependent 2-thiolation of cytidine in position 32 of tRNA, to form 2-thiocytidine (s(2)C32). The sulfur atoms are provided by the cysteine/cysteine desulfurase (IscS) system. In Actinobacillus pleuropneumoniae serotype 5b (strain L20), this protein is tRNA-cytidine(32) 2-sulfurtransferase.